A 170-amino-acid polypeptide reads, in one-letter code: Acetyl-CoA decarbonylase/synthase complex subunit epsilon 1 (170 aa).

The protein belongs to the CdhB family. In terms of assembly, heterotetramer of two alpha and two epsilon subunits. The ACDS complex is made up of alpha, epsilon, beta, gamma and delta subunits with a probable stoichiometry of (alpha(2)epsilon(2))(4)-beta(8)-(gamma(1)delta(1))(8).

It functions in the pathway one-carbon metabolism; methanogenesis from acetate. Functionally, part of a complex that catalyzes the reversible cleavage of acetyl-CoA, allowing growth on acetate as sole source of carbon and energy. The alpha-epsilon subcomponent functions as a carbon monoxide dehydrogenase. The precise role of the epsilon subunit is unclear; it may have a stabilizing role within the alpha(2)epsilon(2) component and/or be involved in electron transfer to FAD during a potential FAD-mediated CO oxidation. This is Acetyl-CoA decarbonylase/synthase complex subunit epsilon 1 (cdhB1) from Methanosarcina thermophila.